The primary structure comprises 545 residues: CTP synthase (545 aa).

The interval 1–266 (MTTNYIFVTG…DDYICKRFSL (266 aa)) is amidoligase domain. A CTP-binding site is contributed by Ser14. Ser14 contacts UTP. ATP contacts are provided by residues 15 to 20 (SLGKGI) and Asp72. 2 residues coordinate Mg(2+): Asp72 and Glu140. CTP contacts are provided by residues 147–149 (DIE), 187–192 (KTKPTQ), and Lys223. UTP is bound by residues 187 to 192 (KTKPTQ) and Lys223. ATP is bound at residue 239–241 (KDV). The Glutamine amidotransferase type-1 domain maps to 291 to 542 (TIGMVGKYIE…VKAASEFQKR (252 aa)). Gly352 is a binding site for L-glutamine. The active-site Nucleophile; for glutamine hydrolysis is Cys379. L-glutamine contacts are provided by residues 380–383 (LGMQ), Glu403, and Arg470. Residues His515 and Glu517 contribute to the active site.

This sequence belongs to the CTP synthase family. Homotetramer.

The enzyme catalyses UTP + L-glutamine + ATP + H2O = CTP + L-glutamate + ADP + phosphate + 2 H(+). It catalyses the reaction L-glutamine + H2O = L-glutamate + NH4(+). It carries out the reaction UTP + NH4(+) + ATP = CTP + ADP + phosphate + 2 H(+). The protein operates within pyrimidine metabolism; CTP biosynthesis via de novo pathway; CTP from UDP: step 2/2. Its activity is regulated as follows. Allosterically activated by GTP, when glutamine is the substrate; GTP has no effect on the reaction when ammonia is the substrate. The allosteric effector GTP functions by stabilizing the protein conformation that binds the tetrahedral intermediate(s) formed during glutamine hydrolysis. Inhibited by the product CTP, via allosteric rather than competitive inhibition. In terms of biological role, catalyzes the ATP-dependent amination of UTP to CTP with either L-glutamine or ammonia as the source of nitrogen. Regulates intracellular CTP levels through interactions with the four ribonucleotide triphosphates. This chain is CTP synthase, found in Shigella boydii serotype 18 (strain CDC 3083-94 / BS512).